We begin with the raw amino-acid sequence, 346 residues long: Short-wave-sensitive opsin 1 (346 aa).

Residues 1 to 31 (MSGEDDFYLFQNISSVGPWDGPQYHLAPVWA) are Extracellular-facing. Asparagine 12 is a glycosylation site (N-linked (GlcNAc...) asparagine). Residues 32-56 (FRLQAAFMGFVFFVGTPLNAIVLVA) form a helical membrane-spanning segment. At 57–68 (TLHYKKLRQPLN) the chain is on the cytoplasmic side. The helical transmembrane segment at 69–94 (YILVNVSLGGFLFCIFSVFTVFIASC) threads the bilayer. Over 95 to 108 (HGYFLFGRHVCALE) the chain is Extracellular. Cysteine 105 and cysteine 182 are joined by a disulfide. A helical membrane pass occupies residues 109–128 (AFLGSVAGLVTGWSLAFLAF). The Cytoplasmic segment spans residues 129–147 (ERYVVICKPFGSIRFNSKH). Residues 148-171 (ALMVVLATWIIGIGVSIPPFFGWS) traverse the membrane as a helical segment. The Extracellular segment spans residues 172 to 197 (RFIPEGLQCSCGPDWYTVGTKYRSEY). Residues 198–225 (YTWFLFIFCFIIPLSLICFSYSQLLRTL) form a helical membrane-spanning segment. The Cytoplasmic portion of the chain corresponds to 226–247 (RAVAAQQQESATTQKAEREVSH). A helical transmembrane segment spans residues 248 to 271 (MVVVMVGSFCLCYVPYAALAMYMV). Residues 272 to 279 (NNRNHGLD) are Extracellular-facing. The helical transmembrane segment at 280–304 (LRLVTIPAFFSKSSCVYNPIIYCFM) threads the bilayer. Residue lysine 291 is modified to N6-(retinylidene)lysine. Residues 305-346 (NKQFRACILEMVCRKPMADESDVSGSQKTEVSTVSSSKVGPH) lie on the Cytoplasmic side of the membrane. The tract at residues 324–346 (ESDVSGSQKTEVSTVSSSKVGPH) is disordered. Residues 330–346 (SQKTEVSTVSSSKVGPH) are compositionally biased toward low complexity.

It belongs to the G-protein coupled receptor 1 family. Opsin subfamily. Phosphorylated on some or all of the serine and threonine residues present in the C-terminal region. As to expression, expressed in the inner and outer segments of cone photoreceptor cells in the retina (at protein level).

Its subcellular location is the cell membrane. It is found in the photoreceptor inner segment. The protein resides in the cell projection. The protein localises to the cilium. It localises to the photoreceptor outer segment. Its subcellular location is the cytoplasm. It is found in the perinuclear region. Functionally, visual pigments are the light-absorbing molecules that mediate vision. They consist of an apoprotein, opsin, covalently linked to cis-retinal. Required for the maintenance of cone outer segment organization in the ventral retina, but not essential for the maintenance of functioning cone photoreceptors. Involved in ensuring correct abundance and localization of retinal membrane proteins. May increase spectral sensitivity in dim light. This chain is Short-wave-sensitive opsin 1 (Opn1sw), found in Mus musculus (Mouse).